The primary structure comprises 445 residues: Tubulin beta chain (445 aa).

GTP contacts are provided by Q11, E69, S138, G142, T143, G144, N204, and N226. E69 contacts Mg(2+). The interval 426–445 (QDATAEEEGEFEEEEGDVEA) is disordered. The segment covering 429–445 (TAEEEGEFEEEEGDVEA) has biased composition (acidic residues).

This sequence belongs to the tubulin family. As to quaternary structure, dimer of alpha and beta chains. A typical microtubule is a hollow water-filled tube with an outer diameter of 25 nm and an inner diameter of 15 nM. Alpha-beta heterodimers associate head-to-tail to form protofilaments running lengthwise along the microtubule wall with the beta-tubulin subunit facing the microtubule plus end conferring a structural polarity. Microtubules usually have 13 protofilaments but different protofilament numbers can be found in some organisms and specialized cells. Interacts with DCX/apicortin; the interaction stabilizes microtubule assembly. Mg(2+) is required as a cofactor.

The protein localises to the cytoplasm. Its subcellular location is the cytoskeleton. Tubulin is the major constituent of microtubules, a cylinder consisting of laterally associated linear protofilaments composed of alpha- and beta-tubulin heterodimers. Microtubules grow by the addition of GTP-tubulin dimers to the microtubule end, where a stabilizing cap forms. Below the cap, tubulin dimers are in GDP-bound state, owing to GTPase activity of alpha-tubulin. This chain is Tubulin beta chain, found in Plasmodium falciparum.